A 159-amino-acid polypeptide reads, in one-letter code: MNKHKTDYAGYACCVICGLIVGIIFTATLLKVVERKLVHTPSIDKTIKDAYIREDCPTDWISYNNKCIHLSTDRKTWEEGRNACKALNPNSDLIKIETPNELSFLRSIRRGYWVGESEILNQTTPYNFIAKNATKNGTKKRKYICSTTNTPKLHSCYTI.

At 1 to 9 (MNKHKTDYA) the chain is on the cytoplasmic side. Residues 10–30 (GYACCVICGLIVGIIFTATLL) traverse the membrane as a helical; Signal-anchor for type II membrane protein segment. The Extracellular segment spans residues 31-159 (KVVERKLVHT…TPKLHSCYTI (129 aa)). The region spanning 63-159 (YNNKCIHLST…TPKLHSCYTI (97 aa)) is the C-type lectin domain.

The protein belongs to the poxviridae A40 protein family.

The protein resides in the host membrane. The protein is Protein A40 of Bos taurus (Bovine).